Reading from the N-terminus, the 89-residue chain is Small ribosomal subunit protein bS20 (89 aa).

It belongs to the bacterial ribosomal protein bS20 family.

Binds directly to 16S ribosomal RNA. This Stenotrophomonas maltophilia (strain R551-3) protein is Small ribosomal subunit protein bS20.